Reading from the N-terminus, the 419-residue chain is UDP-N-acetylglucosamine 1-carboxyvinyltransferase (419 aa).

22–23 contacts phosphoenolpyruvate; it reads KN. Residue arginine 93 participates in UDP-N-acetyl-alpha-D-glucosamine binding. The active-site Proton donor is the cysteine 117. Position 117 is a 2-(S-cysteinyl)pyruvic acid O-phosphothioketal (cysteine 117). Residues aspartate 306 and isoleucine 328 each coordinate UDP-N-acetyl-alpha-D-glucosamine.

The protein belongs to the EPSP synthase family. MurA subfamily.

The protein localises to the cytoplasm. The catalysed reaction is phosphoenolpyruvate + UDP-N-acetyl-alpha-D-glucosamine = UDP-N-acetyl-3-O-(1-carboxyvinyl)-alpha-D-glucosamine + phosphate. It participates in cell wall biogenesis; peptidoglycan biosynthesis. In terms of biological role, cell wall formation. Adds enolpyruvyl to UDP-N-acetylglucosamine. This Magnetococcus marinus (strain ATCC BAA-1437 / JCM 17883 / MC-1) protein is UDP-N-acetylglucosamine 1-carboxyvinyltransferase.